The primary structure comprises 96 residues: Guanine nucleotide-binding protein alpha-9 subunit (96 aa).

The G-alpha domain maps to 2-96 (YFHSTAIILF…ISASLKMVGV (95 aa)). A G1 motif region spans residues 9 to 16 (ILFLNKID). Residues 13–16 (NKID) and Ala-69 each bind GTP. The G2 motif stretch occupies residues 67-72 (TSATDT).

Belongs to the G-alpha family. G proteins are composed of 3 units; alpha, beta and gamma. The alpha chain contains the guanine nucleotide binding site. In terms of tissue distribution, expressed in ASJ neurons.

Functionally, guanine nucleotide-binding proteins (G proteins) are involved as modulators or transducers in various transmembrane signaling systems. Plays a role in innate immunity and maintaining survival in response to metabolites of E.coli. This might be by regulating the expression and signaling of genes such as lys-8, ins-7 and daf-28. Has a role in lifespan to promote longevity. The sequence is that of Guanine nucleotide-binding protein alpha-9 subunit from Caenorhabditis elegans.